The primary structure comprises 631 residues: Phosphomethylpyrimidine synthase (631 aa).

Residues Asn-239, Met-268, Tyr-297, His-333, 353–355, 394–397, and Glu-433 each bind substrate; these read SRG and DGLR. Residue His-437 participates in Zn(2+) binding. A substrate-binding site is contributed by Tyr-460. A Zn(2+)-binding site is contributed by His-501. Residues Cys-581, Cys-584, and Cys-589 each contribute to the [4Fe-4S] cluster site.

It belongs to the ThiC family. As to quaternary structure, homodimer. The cofactor is [4Fe-4S] cluster.

The catalysed reaction is 5-amino-1-(5-phospho-beta-D-ribosyl)imidazole + S-adenosyl-L-methionine = 4-amino-2-methyl-5-(phosphooxymethyl)pyrimidine + CO + 5'-deoxyadenosine + formate + L-methionine + 3 H(+). It participates in cofactor biosynthesis; thiamine diphosphate biosynthesis. Functionally, catalyzes the synthesis of the hydroxymethylpyrimidine phosphate (HMP-P) moiety of thiamine from aminoimidazole ribotide (AIR) in a radical S-adenosyl-L-methionine (SAM)-dependent reaction. This is Phosphomethylpyrimidine synthase from Escherichia fergusonii (strain ATCC 35469 / DSM 13698 / CCUG 18766 / IAM 14443 / JCM 21226 / LMG 7866 / NBRC 102419 / NCTC 12128 / CDC 0568-73).